We begin with the raw amino-acid sequence, 201 residues long: Recombination protein RecR (201 aa).

Residues 60–75 (CSRCGNVDTVDPCTVC) form a C4-type zinc finger. One can recognise a Toprim domain in the interval 83-178 (SVIIVVEDVS…KITRLAHGVP (96 aa)).

It belongs to the RecR family.

Functionally, may play a role in DNA repair. It seems to be involved in an RecBC-independent recombinational process of DNA repair. It may act with RecF and RecO. This is Recombination protein RecR from Rhizobium etli (strain ATCC 51251 / DSM 11541 / JCM 21823 / NBRC 15573 / CFN 42).